The chain runs to 708 residues: Leukotoxin translocation ATP-binding protein LktB (708 aa).

Residues 1-126 (MEANHQRNDL…ACYQGQLILV (126 aa)) enclose the Peptidase C39 domain. The region spanning 155–437 (FLETLIVSIF…LAQLWQDFQQ (283 aa)) is the ABC transmembrane type-1 domain. Transmembrane regions (helical) follow at residues 159-179 (LIVS…FQVV), 192-212 (LNII…LSGL), 270-290 (ALTS…MWYY), 296-316 (LVIL…SPIL), and 389-409 (VMVI…LSIG). The region spanning 469–704 (ISFKNIRFRY…SNGLYSYLHQ (236 aa)) is the ABC transporter domain. ATP is bound at residue 503–510 (GRSGSGKS).

This sequence belongs to the ABC transporter superfamily. Protein-1 exporter (TC 3.A.1.109) family. As to quaternary structure, homodimer.

The protein localises to the cell inner membrane. It carries out the reaction ATP + H2O + proteinSide 1 = ADP + phosphate + proteinSide 2.. Functionally, part of the ABC transporter complex LktBD involved in leukotoxin export. Transmembrane domains (TMD) form a pore in the inner membrane and the ATP-binding domain (NBD) is responsible for energy generation. In Bibersteinia trehalosi (Pasteurella trehalosi), this protein is Leukotoxin translocation ATP-binding protein LktB (lktB).